Here is a 308-residue protein sequence, read N- to C-terminus: Olfactory receptor 8D1 (308 aa).

At 1 to 25 (MTMENYSMAAQFVLDGLTQQAELQL) the chain is on the extracellular side. N-linked (GlcNAc...) asparagine glycosylation is present at N5. A helical transmembrane segment spans residues 26 to 46 (PLFLLFLGIYVVTVVGNLGMI). The Cytoplasmic portion of the chain corresponds to 47-54 (LLIAVSPL). Residues 55-75 (LHTPMYYFLSSLSFVDFCYSS) traverse the membrane as a helical segment. Over 76–99 (VITPKMLVNFLGKKNTILYSECMV) the chain is Extracellular. The cysteines at positions 97 and 189 are disulfide-linked. Residues 100-120 (QLFFFVVFVVAEGYLLTAMAY) traverse the membrane as a helical segment. At 121–139 (DRYVAICSPLLYNAIMSSW) the chain is on the cytoplasmic side. A helical membrane pass occupies residues 140-160 (VCSLLVLAAFFLGFLSALTHT). The Extracellular portion of the chain corresponds to 161–197 (SAMMKLSFCKSHIINHYFCDVLPLLNLSCSNTHLNEL). The N-linked (GlcNAc...) asparagine glycan is linked to N186. A helical membrane pass occupies residues 198 to 217 (LLFIIAGFNTLVPTLAVAVS). At 218–237 (YAFILYSILHIRSSEGRSKA) the chain is on the cytoplasmic side. A helical membrane pass occupies residues 238 to 258 (FGTCSSHLMAVVIFFGSITFM). Topologically, residues 259-271 (YFKPPSSNSLDQE) are extracellular. Residues 272-292 (KVSSVFYTTVIPMLNPLIYSL) form a helical membrane-spanning segment. At 293 to 308 (RNKDVKKALRKVLVGK) the chain is on the cytoplasmic side.

Belongs to the G-protein coupled receptor 1 family. Expressed in the tongue.

The protein localises to the cell membrane. Functionally, odorant receptor (Potential). May be involved in taste perception. This Homo sapiens (Human) protein is Olfactory receptor 8D1 (OR8D1).